Here is a 102-residue protein sequence, read N- to C-terminus: Ribonuclease P protein component 1 (102 aa).

Belongs to the eukaryotic/archaeal RNase P protein component 1 family. Consists of a catalytic RNA component and at least 4-5 protein subunits.

Its subcellular location is the cytoplasm. The catalysed reaction is Endonucleolytic cleavage of RNA, removing 5'-extranucleotides from tRNA precursor.. Its function is as follows. Part of ribonuclease P, a protein complex that generates mature tRNA molecules by cleaving their 5'-ends. The polypeptide is Ribonuclease P protein component 1 (Archaeoglobus fulgidus (strain ATCC 49558 / DSM 4304 / JCM 9628 / NBRC 100126 / VC-16)).